The chain runs to 315 residues: Aspartate carbamoyltransferase catalytic subunit (315 aa).

Carbamoyl phosphate-binding residues include R64 and T65. K92 serves as a coordination point for L-aspartate. Carbamoyl phosphate contacts are provided by R114, H142, and Q145. Residues R175 and R229 each contribute to the L-aspartate site. G270 and P271 together coordinate carbamoyl phosphate.

Belongs to the aspartate/ornithine carbamoyltransferase superfamily. ATCase family. In terms of assembly, heterododecamer (2C3:3R2) of six catalytic PyrB chains organized as two trimers (C3), and six regulatory PyrI chains organized as three dimers (R2).

It catalyses the reaction carbamoyl phosphate + L-aspartate = N-carbamoyl-L-aspartate + phosphate + H(+). It functions in the pathway pyrimidine metabolism; UMP biosynthesis via de novo pathway; (S)-dihydroorotate from bicarbonate: step 2/3. In terms of biological role, catalyzes the condensation of carbamoyl phosphate and aspartate to form carbamoyl aspartate and inorganic phosphate, the committed step in the de novo pyrimidine nucleotide biosynthesis pathway. This Methylorubrum extorquens (strain CM4 / NCIMB 13688) (Methylobacterium extorquens) protein is Aspartate carbamoyltransferase catalytic subunit.